The sequence spans 266 residues: Translation initiation factor 2 subunit alpha (266 aa).

Residues G12 to K83 enclose the S1 motif domain.

This sequence belongs to the eIF-2-alpha family. As to quaternary structure, heterotrimer composed of an alpha, a beta and a gamma chain.

Functionally, eIF-2 functions in the early steps of protein synthesis by forming a ternary complex with GTP and initiator tRNA. The protein is Translation initiation factor 2 subunit alpha of Saccharolobus islandicus (strain M.16.27) (Sulfolobus islandicus).